The following is a 224-amino-acid chain: uncharacterized protein (224 aa).

3 N-linked (GlcNAc...) asparagine glycosylation sites follow: N10, N70, and N74.

The protein resides in the endoplasmic reticulum. This is an uncharacterized protein from Saccharomyces cerevisiae (strain ATCC 204508 / S288c) (Baker's yeast).